Here is a 72-residue protein sequence, read N- to C-terminus: Large ribosomal subunit protein bL31 (72 aa).

Residues Cys-16, Cys-18, Cys-38, and Cys-41 each coordinate Zn(2+).

Belongs to the bacterial ribosomal protein bL31 family. Type A subfamily. As to quaternary structure, part of the 50S ribosomal subunit. Zn(2+) is required as a cofactor.

Binds the 23S rRNA. The polypeptide is Large ribosomal subunit protein bL31 (Beutenbergia cavernae (strain ATCC BAA-8 / DSM 12333 / CCUG 43141 / JCM 11478 / NBRC 16432 / NCIMB 13614 / HKI 0122)).